Consider the following 211-residue polypeptide: Beta-crystallin B3 (211 aa).

Methionine 1 carries the N-acetylmethionine modification. The residue at position 2 (alanine 2) is an N-acetylalanine; in Beta-crystallin B3, N-terminally processed. The interval 2–23 is N-terminal arm; sequence AEQHGAPEQAAASKSHGGLGGS. 2 Beta/gamma crystallin 'Greek key' domains span residues 24-63 and 64-108; these read YKVTVYELENFQGKRCELSAECPNLTESLLQKVGSIQVES and GPWL…RPLH. The segment at 109-113 is connecting peptide; the sequence is IDGPD. 2 Beta/gamma crystallin 'Greek key' domains span residues 114 to 155 and 156 to 198; these read HKLH…RVIN and GTWV…RRIR. The tract at residues 200–211 is C-terminal arm; that stretch reads QKWHKRGCFLSS.

The protein belongs to the beta/gamma-crystallin family. In terms of assembly, homo/heterodimer, or complexes of higher-order. The structure of beta-crystallin oligomers seems to be stabilized through interactions between the N-terminal arms.

Crystallins are the dominant structural components of the vertebrate eye lens. This Rattus norvegicus (Rat) protein is Beta-crystallin B3 (Crybb3).